The chain runs to 118 residues: Large ribosomal subunit protein bL20 (118 aa).

It belongs to the bacterial ribosomal protein bL20 family.

Its function is as follows. Binds directly to 23S ribosomal RNA and is necessary for the in vitro assembly process of the 50S ribosomal subunit. It is not involved in the protein synthesizing functions of that subunit. The polypeptide is Large ribosomal subunit protein bL20 (Kosmotoga olearia (strain ATCC BAA-1733 / DSM 21960 / TBF 19.5.1)).